The primary structure comprises 92 residues: Alpha-conotoxin VxXXA (92 aa).

Residues M1–G24 form the signal peptide. Residues Q25–R45 constitute a propeptide that is removed on maturation. 4-hydroxyproline; partial occurs at positions 55, 70, and 74. Intrachain disulfides connect C63/C72, C68/C80, C73/C90, and C78/C92.

It belongs to the conotoxin D superfamily. Homodimer or pseudo-homodimer. Three dimers exist: homodimer of VxXXA, pseudo-homodimer of both VxXXA and [hydroxyPro-74]VxXXA and homodimer of [hydroxyPro-74]VxXXA. These three components exist in a 1:2:1 ratio. VxXXA stands for the form with the Pro-55 hydroxylated. A second major form has both Pro-55 and Pro-74 hydroxylated. The two major forms VxXXA and [hydroxyPro-74]VxXXA exist in a 1:1 ratio. In terms of processing, minor forms are [hydroxyPro-70,hydroxyPro-74]VxXXA and [Pro-55]VxXXA. As to expression, expressed by the venom duct.

The protein resides in the secreted. Alpha-conotoxins act on postsynaptic membranes, they bind to the nicotinic acetylcholine receptors (nAChR) and thus inhibit them. Through its two C-terminal domains, this homodimeric protein would bind to two nAChR allosteric sites, located outside the nAChR C-loop of the principal binding face and at the adjacent binding interface in a clockwise direction. This toxin specifically blocks mammalian neuronal nAChR of the alpha-7/CHRNA7, alpha-3-beta-2/CHRNA3-CHRNB2 (IC(50)=370 nM) and alpha-4-beta-2/CHRNA4-CHRNB2 subtypes. VxXXB inhibits alpha-7/CHRNA7 and alpha-3-beta-2/CHRNA3-CHRNB2 nAChR subtypes with the highest efficiency, followed by VxXXA and VxXXC. VxXXB and VxXXC inhibit the alpha-4-beta-2/CHRNA4-CHRNB2 nAChR subtype more efficiently than VxXXA. This chain is Alpha-conotoxin VxXXA, found in Conus vexillum (Flag cone).